The following is a 397-amino-acid chain: Elongation factor Tu (397 aa).

Residues 10–206 (KPHVNIGTIG…AIDSYIPTPE (197 aa)) enclose the tr-type G domain. Residues 19-26 (GHVDHGKT) are G1. 19 to 26 (GHVDHGKT) provides a ligand contact to GTP. Position 26 (Thr-26) interacts with Mg(2+). Residues 60-64 (GITIN) form a G2 region. Residues 81–84 (DCPG) are G3. GTP is bound by residues 81 to 85 (DCPGH) and 136 to 139 (NKAD). The G4 stretch occupies residues 136-139 (NKAD). Residues 174–176 (SAL) form a G5 region.

This sequence belongs to the TRAFAC class translation factor GTPase superfamily. Classic translation factor GTPase family. EF-Tu/EF-1A subfamily. As to quaternary structure, monomer.

It is found in the cytoplasm. The catalysed reaction is GTP + H2O = GDP + phosphate + H(+). In terms of biological role, GTP hydrolase that promotes the GTP-dependent binding of aminoacyl-tRNA to the A-site of ribosomes during protein biosynthesis. This is Elongation factor Tu from Clostridium botulinum (strain Loch Maree / Type A3).